The chain runs to 352 residues: Neuronal growth regulator 1 (352 aa).

The signal sequence occupies residues 1–35 (MVPLVRGAGGSHQWLAAVLLGLCCLLPAGRLAAPG). Ig-like C2-type domains follow at residues 36–132 (GDFP…VHLT), 137–219 (PKIF…KVTV), and 223–311 (PTIQ…LPLN). The cysteines at positions 58 and 116 are disulfide-linked. Residues asparagine 71 and asparagine 153 are each glycosylated (N-linked (GlcNAc...) asparagine). 2 cysteine pairs are disulfide-bonded: cysteine 158–cysteine 201 and cysteine 243–cysteine 295. Asparagine 273, asparagine 284, asparagine 292, and asparagine 305 each carry an N-linked (GlcNAc...) asparagine glycan. Glycine 322 is lipidated: GPI-anchor amidated glycine. A propeptide spans 323–352 (DAEVLFSCWYLVLTLSSLTSIFYLKNIILH) (removed in mature form).

This sequence belongs to the immunoglobulin superfamily. IgLON family. In terms of assembly, interacts with CEPU-1 and LAMP. Post-translationally, glycosylated. Expressed in embryonic retina, telencephalon, tectum, cerebellum and diencephalon (at protein level).

Its subcellular location is the cell membrane. Functionally, may be involved in cell-adhesion. May participate in the regulation of neurite outgrowth in the developing brain. This is Neuronal growth regulator 1 (NEGR1) from Gallus gallus (Chicken).